The following is a 170-amino-acid chain: Adenine phosphoribosyltransferase (170 aa).

The protein belongs to the purine/pyrimidine phosphoribosyltransferase family. In terms of assembly, homodimer.

It localises to the cytoplasm. It carries out the reaction AMP + diphosphate = 5-phospho-alpha-D-ribose 1-diphosphate + adenine. It participates in purine metabolism; AMP biosynthesis via salvage pathway; AMP from adenine: step 1/1. Functionally, catalyzes a salvage reaction resulting in the formation of AMP, that is energically less costly than de novo synthesis. The polypeptide is Adenine phosphoribosyltransferase (Bacillus anthracis (strain A0248)).